A 475-amino-acid polypeptide reads, in one-letter code: ATP synthase subunit beta 1 (475 aa).

153 to 160 is an ATP binding site; it reads GGAGVGKT.

The protein belongs to the ATPase alpha/beta chains family. As to quaternary structure, F-type ATPases have 2 components, CF(1) - the catalytic core - and CF(0) - the membrane proton channel. CF(1) has five subunits: alpha(3), beta(3), gamma(1), delta(1), epsilon(1). CF(0) has three main subunits: a(1), b(2) and c(9-12). The alpha and beta chains form an alternating ring which encloses part of the gamma chain. CF(1) is attached to CF(0) by a central stalk formed by the gamma and epsilon chains, while a peripheral stalk is formed by the delta and b chains.

Its subcellular location is the cell membrane. It carries out the reaction ATP + H2O + 4 H(+)(in) = ADP + phosphate + 5 H(+)(out). In terms of biological role, produces ATP from ADP in the presence of a proton gradient across the membrane. The catalytic sites are hosted primarily by the beta subunits. The polypeptide is ATP synthase subunit beta 1 (Mycoplasmopsis pulmonis (strain UAB CTIP) (Mycoplasma pulmonis)).